Here is a 255-residue protein sequence, read N- to C-terminus: RNA polymerase sigma-F factor (255 aa).

The Polymerase core binding motif lies at 61–74; the sequence is DLFQIGCIGLLKSV. The segment at residues 221-240 is a DNA-binding region (H-T-H motif); the sequence is QSEVADRLGISQVQVSRLEK.

The protein belongs to the sigma-70 factor family.

Its function is as follows. Sigma factors are initiation factors that promote the attachment of RNA polymerase to specific initiation sites and are then released. This sigma factor is responsible for the expression of sporulation specific genes. The polypeptide is RNA polymerase sigma-F factor (sigF) (Bacillus licheniformis).